The chain runs to 356 residues: tRNA N6-adenosine threonylcarbamoyltransferase (356 aa).

Fe cation is bound by residues His-115 and His-119. Substrate contacts are provided by residues 138-142 (LVSGG), Asp-171, Gly-184, and Asn-283. Asp-311 provides a ligand contact to Fe cation.

The protein belongs to the KAE1 / TsaD family. It depends on Fe(2+) as a cofactor.

It is found in the cytoplasm. It carries out the reaction L-threonylcarbamoyladenylate + adenosine(37) in tRNA = N(6)-L-threonylcarbamoyladenosine(37) in tRNA + AMP + H(+). Its function is as follows. Required for the formation of a threonylcarbamoyl group on adenosine at position 37 (t(6)A37) in tRNAs that read codons beginning with adenine. Is involved in the transfer of the threonylcarbamoyl moiety of threonylcarbamoyl-AMP (TC-AMP) to the N6 group of A37, together with TsaE and TsaB. TsaD likely plays a direct catalytic role in this reaction. The protein is tRNA N6-adenosine threonylcarbamoyltransferase of Prochlorococcus marinus (strain MIT 9313).